Reading from the N-terminus, the 302-residue chain is Sulfate adenylyltransferase subunit 2 (302 aa).

Residues R280–F302 form a disordered region.

This sequence belongs to the PAPS reductase family. CysD subfamily. Heterodimer composed of CysD, the smaller subunit, and CysN.

It carries out the reaction sulfate + ATP + H(+) = adenosine 5'-phosphosulfate + diphosphate. The protein operates within sulfur metabolism; hydrogen sulfide biosynthesis; sulfite from sulfate: step 1/3. In terms of biological role, with CysN forms the ATP sulfurylase (ATPS) that catalyzes the adenylation of sulfate producing adenosine 5'-phosphosulfate (APS) and diphosphate, the first enzymatic step in sulfur assimilation pathway. APS synthesis involves the formation of a high-energy phosphoric-sulfuric acid anhydride bond driven by GTP hydrolysis by CysN coupled to ATP hydrolysis by CysD. This Shewanella baltica (strain OS185) protein is Sulfate adenylyltransferase subunit 2.